A 234-amino-acid chain; its full sequence is Phosphoribosylformylglycinamidine synthase subunit PurQ (234 aa).

The region spanning 5 to 234 (TVGIVVFPGS…ESLFAHLAGA (230 aa)) is the Glutamine amidotransferase type-1 domain. Residue Cys89 is the Nucleophile of the active site. Active-site residues include His206 and Glu208.

In terms of assembly, part of the FGAM synthase complex composed of 1 PurL, 1 PurQ and 2 PurS subunits.

The protein localises to the cytoplasm. It carries out the reaction N(2)-formyl-N(1)-(5-phospho-beta-D-ribosyl)glycinamide + L-glutamine + ATP + H2O = 2-formamido-N(1)-(5-O-phospho-beta-D-ribosyl)acetamidine + L-glutamate + ADP + phosphate + H(+). It catalyses the reaction L-glutamine + H2O = L-glutamate + NH4(+). Its pathway is purine metabolism; IMP biosynthesis via de novo pathway; 5-amino-1-(5-phospho-D-ribosyl)imidazole from N(2)-formyl-N(1)-(5-phospho-D-ribosyl)glycinamide: step 1/2. Its function is as follows. Part of the phosphoribosylformylglycinamidine synthase complex involved in the purines biosynthetic pathway. Catalyzes the ATP-dependent conversion of formylglycinamide ribonucleotide (FGAR) and glutamine to yield formylglycinamidine ribonucleotide (FGAM) and glutamate. The FGAM synthase complex is composed of three subunits. PurQ produces an ammonia molecule by converting glutamine to glutamate. PurL transfers the ammonia molecule to FGAR to form FGAM in an ATP-dependent manner. PurS interacts with PurQ and PurL and is thought to assist in the transfer of the ammonia molecule from PurQ to PurL. The polypeptide is Phosphoribosylformylglycinamidine synthase subunit PurQ (Chlorobaculum tepidum (strain ATCC 49652 / DSM 12025 / NBRC 103806 / TLS) (Chlorobium tepidum)).